A 1230-amino-acid polypeptide reads, in one-letter code: Serine/threonine-protein kinase PDK1 (1230 aa).

Residues 1 to 277 (MASSHFGPAS…ASSGALKKHS (277 aa)) form a disordered region. A compositionally biased stretch (low complexity) spans 34–50 (SSSSSSRSTTTCSSTSS). The span at 62 to 76 (ETSTAATSRSQLPSN) shows a compositional bias: polar residues. Over residues 77–87 (RHSENEAEHDT) the composition is skewed to basic and acidic residues. Polar residues-rich tracts occupy residues 107–117 (PRSNRLGTSPQ) and 140–175 (SKRQSNTETVSGTSPSTPLGKSFLAQQDLSPNSSTI). Residues 185–202 (PNDRLSHDRESHSAERPR) are compositionally biased toward basic and acidic residues. Positions 217-226 (STPSSPTNSY) are enriched in polar residues. Positions 252 to 262 (ARDGDDRERRQ) are enriched in basic and acidic residues. The Protein kinase domain maps to 281-801 (WVLGEELGVG…ITFIKTHPFF (521 aa)). ATP-binding positions include 291 to 293 (SYS) and K319. 2 disordered regions span residues 345–522 (LSDP…RSGA) and 534–597 (TLPP…KMSA). Composition is skewed to polar residues over residues 378 to 397 (TASIGGQSSMASVSGGTVSN) and 408 to 433 (IVTTSSAASSPVLTASSGSTQLSPTA). Composition is skewed to basic and acidic residues over residues 466–494 (GGEDGKDGQDGQETPSREWDRDRDWDNMT) and 502–521 (VREESAEGGEKEKDEEERSG). The span at 535-544 (LPPPQIPSTP) shows a compositional bias: pro residues. Residues 555 to 569 (DGHRTSRETPRDRPH) are compositionally biased toward basic and acidic residues. Residues 621 to 623 (SLA) and E627 each bind ATP. Residue D666 is the Proton acceptor of the active site. Positions 670 and 684 each coordinate ATP. Residues 850 to 859 (EDEDGFEYDA) are compositionally biased toward acidic residues. Disordered stretches follow at residues 850 to 871 (EDEDGFEYDADTVSPRPEGGAV), 907 to 955 (LGED…GGNR), 972 to 1035 (GGGM…SDEA), and 1116 to 1152 (EADGDPAGSDSGAGLSSSSHVESGGGGVGGGGRGGGH). The span at 927–942 (GKREKEVEKKKGEKAR) shows a compositional bias: basic and acidic residues. Composition is skewed to low complexity over residues 977 to 992 (GSATSVAASDTVRTPG), 1002 to 1030 (RPGSRAGIPSFGLGPGSGSRSNRGSGASM), and 1120 to 1137 (DPAGSDSGAGLSSSSHVE). Residues 1138-1152 (SGGGGVGGGGRGGGH) are compositionally biased toward gly residues.

This sequence belongs to the protein kinase superfamily. AGC Ser/Thr protein kinase family. PDPK1 subfamily.

The catalysed reaction is L-seryl-[protein] + ATP = O-phospho-L-seryl-[protein] + ADP + H(+). It catalyses the reaction L-threonyl-[protein] + ATP = O-phospho-L-threonyl-[protein] + ADP + H(+). Functionally, serine/threonine-protein kinase that functions in the sphingolipid-mediated signaling pathway, regulating organization of the plasma membrane. May phosphorylate PKC1 to activate the cell integrity MAPK cascade during cell wall and membrane stress. May regulate sphingolipid metabolism upstream of YPK1. The protein is Serine/threonine-protein kinase PDK1 of Cryptococcus neoformans var. grubii serotype A (strain H99 / ATCC 208821 / CBS 10515 / FGSC 9487) (Filobasidiella neoformans var. grubii).